A 536-amino-acid chain; its full sequence is Caspase recruitment domain-containing protein 9 (536 aa).

Ser2 bears the Phosphoserine mark. Positions 3, 10, and 73 each coordinate Zn(2+). Residues 6–98 enclose the CARD domain; that stretch reads NDDECWSALE…QLYRKVTGKE (93 aa). The linker stretch occupies residues 99–116; sequence PARVFSMIIDASGESGLT. 2 coiled-coil regions span residues 117-277 and 303-420; these read QLLM…HRNS and SLRK…QLDM. A Glycyl lysine isopeptide (Lys-Gly) (interchain with G-Cter in ubiquitin) cross-link involves residue Lys125. Thr231 is modified (phosphothreonine). A Phosphoserine modification is found at Ser277. A phosphoserine mark is found at Ser424, Ser425, Ser431, Ser451, Ser461, Ser483, and Ser498. The tract at residues 425–451 is disordered; sequence SDLEDSSPRNSQELSLPQDLEEDAQLS. The segment at 472 to 536 is disordered; that stretch reads KHLSQTHDTV…GSDNTDTEGS (65 aa). Over residues 487-502 the composition is skewed to basic and acidic residues; sequence PPEKERRRLKESFENY. Residues Thr531 and Thr533 each carry the phosphothreonine; by CK2 modification.

As to quaternary structure, monomer. Homodimer; homodimerization is mediated by the CARD domain which forms an extensive interaction with the adjacent linker and coiled-coil regions; leads to an autoinhibited state. Homomultimer; polymerizes following activation, forming a nucleating helical template that seeds BCL10-filament formation via a CARD-CARD interaction. Interacts (via CARD domain) with BCL10 (via CARD domain); interaction takes place following CARD9 activation and polymerization, leading to the formation of a filamentous CBM complex assembly. Component of a CBM complex (CARD9-BCL10, MALT1), composed of CARD9, BCL10 and MALT1. Interacts with RASGRF1. Interacts with NOD2 (via NACHT domain); interaction is direct. Interacts with RIPK2. Interacts with VHL; without leading to protein degradation. In terms of processing, phosphorylated at Thr-231 by PRKCD downstream of C-type lectin receptors activation: phosphorylation promotes interaction with BCL10, followed by activation of NF-kappa-B and MAP kinase p38 pathways. Phosphorylated at Thr-531 and Thr-533 by CK2 following interaction with VHL, leading to inhibit the ability to activate NF-kappa-B. Post-translationally, ubiquitinated at Lys-125 via 'Lys-27'-linked ubiquitin by TRIM62 downstream of C-type lectin receptors activation; leading to CARD9 activation, followed by activation of NF-kappa-B and MAP kinase p38 pathways. Deubiquitinated at Lys-125 by USP15, inhibiting CARD9.

The protein localises to the cytoplasm. Its activity is regulated as follows. Maintained in an autoinhibited state via homodimerization in which the CARD domain forms an extensive interaction with the adjacent linker and coiled-coil regions. Activation downstream of C-type lectin receptors, by phosphorylation by PRKCD and/or ubiquitination by TRIM62, triggers disruption of the CARD domain-coiled coil interface, CARD9 homooligomerization and BCL10 recruitment, followed by activation of NF-kappa-B and MAP kinase p38 pathways. Zinc-binding inhibits activation by stabilizing the CARD ground-state conformation and restricting its capacity to form BCL10-nucleating filaments. Adapter protein that plays a key role in innate immune response against fungi by forming signaling complexes downstream of C-type lectin receptors. CARD9-mediated signals are essential for antifungal immunity against a subset of fungi from the phylum Ascomycota. Transduces signals in myeloid cells downstream of C-type lectin receptors CLEC7A (dectin-1), CLEC6A (dectin-2) and CLEC4E (Mincle), which detect pathogen-associated molecular pattern metabolites (PAMPs), such as fungal carbohydrates, and trigger CARD9 activation. Upon activation, CARD9 homooligomerizes to form a nucleating helical template that recruits BCL10 via CARD-CARD interaction, thereby promoting polymerization of BCL10 and subsequent recruitment of MALT1: this leads to activation of NF-kappa-B and MAP kinase p38 (MAPK11, MAPK12, MAPK13 and/or MAPK14) pathways which stimulate expression of genes encoding pro-inflammatory cytokines and chemokines. CARD9 signaling in antigen-presenting cells links innate sensing of fungi to the activation of adaptive immunity and provides a cytokine milieu that induces the development and subsequent of interleukin 17-producing T helper (Th17) cells. Also involved in activation of myeloid cells via classical ITAM-associated receptors and TLR: required for TLR-mediated activation of MAPK, while it is not required for TLR-induced activation of NF-kappa-B. CARD9 can also be engaged independently of BCL10: forms a complex with RASGRF1 downstream of C-type lectin receptors, which recruits and activates HRAS, leading to ERK activation and the production of cytokines. Acts as an important regulator of the intestinal commensal fungi (mycobiota) component of the gut microbiota. Plays an essential role in antifungal immunity against dissemination of gut fungi: acts by promoting induction of antifungal IgG antibodies response in CX3CR1(+) macrophages to confer protection against disseminated C.albicans or C.auris infection. Also mediates immunity against other pathogens, such as certain bacteria, viruses and parasites; CARD9 signaling is however redundant with other innate immune responses. In response to L.monocytogenes infection, required for the production of inflammatory cytokines activated by intracellular peptidoglycan: acts by connecting NOD2 recognition of peptidoglycan to downstream activation of MAP kinases (MAPK) without activating NF-kappa-B. In Rattus norvegicus (Rat), this protein is Caspase recruitment domain-containing protein 9.